The sequence spans 280 residues: Lysosome-associated membrane glycoprotein 5 (280 aa).

The first 29 residues, 1-29 (MDLRRRALLGVDGLRVLLMLFHTVTRIMA), serve as a signal peptide directing secretion. The Extracellular portion of the chain corresponds to 30–235 (EQEVENLSGL…PVDEREQLEE (206 aa)). Asn-35 and Asn-53 each carry an N-linked (GlcNAc...) asparagine glycan. Residues 236 to 256 (TLPLILGLILGLVIVVTLVIY) traverse the membrane as a helical segment. Topologically, residues 257-280 (HIHHKMTANQVQIPRDRSQYKHMG) are cytoplasmic.

Belongs to the LAMP family. Glycosylated.

It is found in the cytoplasmic vesicle membrane. The protein resides in the cell membrane. Its subcellular location is the cell projection. The protein localises to the dendrite. It localises to the cytoplasmic vesicle. It is found in the secretory vesicle. The protein resides in the synaptic vesicle membrane. Its subcellular location is the growth cone membrane. The protein localises to the early endosome membrane. It localises to the recycling endosome. It is found in the endoplasmic reticulum-Golgi intermediate compartment membrane. The protein resides in the endosome membrane. Plays a role in short-term synaptic plasticity in a subset of GABAergic neurons in the brain. The polypeptide is Lysosome-associated membrane glycoprotein 5 (LAMP5) (Bos taurus (Bovine)).